Here is a 244-residue protein sequence, read N- to C-terminus: Serine-rich single-pass membrane protein 1 (244 aa).

Residues 35-55 (CGTIGSFLLWYFVIVFVLMFF) traverse the membrane as a helical segment. 3 disordered regions span residues 65–114 (DKKD…PVTN), 126–191 (QRRA…LGSY), and 210–244 (LAHH…FSKF). The segment covering 80 to 94 (ASKETSCKRQSKDSA) has biased composition (basic and acidic residues). 2 stretches are compositionally biased toward polar residues: residues 96-114 (DPSQ…PVTN) and 132-142 (QSQFNEVNQNQ). The segment covering 161–176 (SWKESESEHHPSPDSI) has biased composition (basic and acidic residues).

The protein localises to the membrane. This is Serine-rich single-pass membrane protein 1 (SSMEM1) from Homo sapiens (Human).